We begin with the raw amino-acid sequence, 1240 residues long: Pectate lyase L (1240 aa).

The first 26 residues, 1–26 (MRNCKGLSILLCFLLVFFAMPFPAVA), serve as a signal peptide directing secretion. Has catalytic activity regions lie at residues 27-551 (EEAE…VTVR) and 545-1240 (TLKV…KSIK). Ca(2+) contacts are provided by Asp325, Glu349, Asp350, Asp1049, Asp1073, Asp1074, and Asp1077. The active-site Proton acceptor is Lys1117.

It belongs to the polysaccharide lyase 9 family. It depends on Ca(2+) as a cofactor.

It localises to the secreted. The catalysed reaction is Eliminative cleavage of (1-&gt;4)-alpha-D-galacturonan to give oligosaccharides with 4-deoxy-alpha-D-galact-4-enuronosyl groups at their non-reducing ends.. Its activity is regulated as follows. Inhibited by the metal chelator ethylenediaminetetraacetic acid (EDTA). Functionally, cleaves polygalacturonate or partially methylated pectin. When assayed on polygalacturonate or on pectin, it releases monogalacturonate as the principal product. The chain is Pectate lyase L from Thermoclostridium stercorarium (Clostridium stercorarium).